Consider the following 590-residue polypeptide: MKFSKPKFSMPKWRLTKEDFTPKGMWRNFKNFIVIEAKPGTTLAERFLTNEDLYPVPKSQRVWGPWNYVAFWLADSVNVNTWMIAGTAVESGLSWWEAWITVWVGYTIAAFILTIAGRAGAVYHISFPVLSRSSFGIWGSLWPILNRAVMACVWYGVQAWIGGECVTLMIRSIWPSFSHIPNTMAKSGTETYQWVGFFIFWLISNVAIWFPVYQIRHLFTAKSFLAPPAAIAFLIWALVKAHGAGDAIHAKTQLSTWNHGWAVTAGIISCLDNFATLIVNNPDFTRFATTPNAPIFPQLITIPMGFGITTLIGVLVGSASKSIYGENIWNPLDLLKSFLDHSNHHGVRAGVFFISTGLCLAQLGVNIAANTVSAGNDTSALCPMFINIRRGGYIASIIGICMCPWNLLSSSNSFANSLSAYAVFLSSFAGILIADYFVIRKGYLKVDALYTINPNEPYWFTYGINLRAFASYICGLLINVVGLAGAVGDKVPKAALTMNNIAYLLGIVTSFLSHLIICKIFPVTACGEKFLDERPEETDNYLLTLESTEDTISSYEETEGIPVKKVSYDSKEKSDDGKSGGIDIKESSVF.

At 1–68 (MKFSKPKFSM…SQRVWGPWNY (68 aa)) the chain is on the cytoplasmic side. A helical membrane pass occupies residues 69 to 89 (VAFWLADSVNVNTWMIAGTAV). Topologically, residues 90 to 94 (ESGLS) are extracellular. Residues 95 to 115 (WWEAWITVWVGYTIAAFILTI) traverse the membrane as a helical segment. The Cytoplasmic portion of the chain corresponds to 116–124 (AGRAGAVYH). The helical transmembrane segment at 125–145 (ISFPVLSRSSFGIWGSLWPIL) threads the bilayer. Residues 146–149 (NRAV) are Extracellular-facing. The helical transmembrane segment at 150–170 (MACVWYGVQAWIGGECVTLMI) threads the bilayer. Residues 171 to 194 (RSIWPSFSHIPNTMAKSGTETYQW) lie on the Cytoplasmic side of the membrane. The helical transmembrane segment at 195–215 (VGFFIFWLISNVAIWFPVYQI) threads the bilayer. The Extracellular portion of the chain corresponds to 216–218 (RHL). A helical membrane pass occupies residues 219–239 (FTAKSFLAPPAAIAFLIWALV). Residues 240 to 258 (KAHGAGDAIHAKTQLSTWN) lie on the Cytoplasmic side of the membrane. The helical transmembrane segment at 259–279 (HGWAVTAGIISCLDNFATLIV) threads the bilayer. Over 280-298 (NNPDFTRFATTPNAPIFPQ) the chain is Extracellular. Residues 299–319 (LITIPMGFGITTLIGVLVGSA) form a helical membrane-spanning segment. Over 320 to 390 (SKSIYGENIW…LCPMFINIRR (71 aa)) the chain is Cytoplasmic. A helical membrane pass occupies residues 391–411 (GGYIASIIGICMCPWNLLSSS). Residues 412–418 (NSFANSL) are Extracellular-facing. A helical membrane pass occupies residues 419–439 (SAYAVFLSSFAGILIADYFVI). Residues 440 to 467 (RKGYLKVDALYTINPNEPYWFTYGINLR) are Cytoplasmic-facing. The helical transmembrane segment at 468 to 488 (AFASYICGLLINVVGLAGAVG) threads the bilayer. Topologically, residues 489–500 (DKVPKAALTMNN) are extracellular. Residues 501–521 (IAYLLGIVTSFLSHLIICKIF) form a helical membrane-spanning segment. The Cytoplasmic portion of the chain corresponds to 522–590 (PVTACGEKFL…GIDIKESSVF (69 aa)). The interval 566–590 (VSYDSKEKSDDGKSGGIDIKESSVF) is disordered.

The protein belongs to the purine-cytosine permease (2.A.39) family.

It is found in the cytoplasm. It localises to the nucleus. The protein resides in the membrane. This is an uncharacterized protein from Schizosaccharomyces pombe (strain 972 / ATCC 24843) (Fission yeast).